A 321-amino-acid polypeptide reads, in one-letter code: Probable E3 ubiquitin-protein ligase BAH1-like 1 (321 aa).

The 149-residue stretch at 1-149 folds into the SPX domain; the sequence is MKFAKKYEKY…YSKQGQEFKA (149 aa). An RING-type zinc finger spans residues 217 to 266; that stretch reads CSICLDTVFDPVALSCGHIYCYLCSCSAASVTIVDGLKSAERKSKCPLCR.

Belongs to the RING-type zinc finger family.

The enzyme catalyses S-ubiquitinyl-[E2 ubiquitin-conjugating enzyme]-L-cysteine + [acceptor protein]-L-lysine = [E2 ubiquitin-conjugating enzyme]-L-cysteine + N(6)-ubiquitinyl-[acceptor protein]-L-lysine.. It functions in the pathway protein modification; protein ubiquitination. This chain is Probable E3 ubiquitin-protein ligase BAH1-like 1, found in Oryza sativa subsp. indica (Rice).